Reading from the N-terminus, the 503-residue chain is Type II secretion system ATPase E (503 aa).

Residues Cys397, Cys400, Cys430, and Cys433 each contribute to the Zn(2+) site.

This sequence belongs to the GSP E family. In terms of assembly, forms homooligomers; most probably hexamers. Interacts with EpsL/GspL. Zn(2+) serves as cofactor.

Its subcellular location is the cell inner membrane. It catalyses the reaction ATP + H2O + cellular proteinSide 1 = ADP + phosphate + cellular proteinSide 2.. In terms of biological role, ATPase component of the type II secretion system required for the energy-dependent secretion of extracellular factors such as proteases and toxins from the periplasm. Acts as a molecular motor to provide the energy that is required for assembly of the pseudopilus and the extrusion of substrates generated in the cytoplasm. The protein is Type II secretion system ATPase E (epsE) of Vibrio cholerae serotype O1 (strain ATCC 39315 / El Tor Inaba N16961).